Consider the following 450-residue polypeptide: Protein tweety homolog 1 (450 aa).

Over 1–43 the chain is Extracellular; sequence MGAPPGYRPSAWVHLLHQLPRADFQLRPVPSGFAPRDQEYQQA. A helical transmembrane segment spans residues 44–64; it reads LLLVAALAGLGLGLSLIFIAV. Over 65 to 88 the chain is Cytoplasmic; that stretch reads YLIRFCCCRPPEPHGAKSPPPGGG. Residues 89–109 traverse the membrane as a helical segment; that stretch reads CVTWSCIAALLVGCAGIGIGF. At 110–214 the chain is on the extracellular side; the sequence is YGNSETSDGV…DVTFVEEYRW (105 aa). A glycan (N-linked (GlcNAc...) asparagine) is linked at Asn130. A helical transmembrane segment spans residues 215-235; it reads LAYVLLLLLVLLVCLFTLLGL. The Cytoplasmic segment spans residues 236–240; that stretch reads AKQSK. Residues 241-261 traverse the membrane as a helical segment; sequence WLVVVMTAMSLLVLVLSWGSM. Residues 262 to 390 lie on the Extracellular side of the membrane; the sequence is GLEAATAVGL…LRGLCEDALE (129 aa). Cystine bridges form between Cys275–Cys385 and Cys303–Cys370. 2 N-linked (GlcNAc...) asparagine glycosylation sites follow: Asn284 and Asn355. Residues 391–411 form a helical membrane-spanning segment; it reads GLLFLMLFSLLSAGALATTLC. Over 412 to 450 the chain is Cytoplasmic; sequence SLPRAWALFPPSDDYDDTDDDDPFNPQESKRFVQWQSSI. The segment at 428–450 is disordered; the sequence is DTDDDDPFNPQESKRFVQWQSSI. Ser440 is subject to Phosphoserine.

This sequence belongs to the tweety family. As to quaternary structure, homotetramer; disulfide-linked. Homodimer. N-glycosylated. Contains high-mannose, hybrid and complex oligosaccharides. Expressed in the astrocytes (at protein level). Restricted mainly to neural tissues. Strongly expressed in brain and eye.

The protein resides in the cell membrane. It carries out the reaction chloride(in) = chloride(out). The catalysed reaction is L-glutamate(out) = L-glutamate(in). Inhibited by (4-[(2-butyl-6,7-dichloro-2- cyclopentyl-2,3-dihydro-1-oxo-1H-inden-5-yl)oxy]butanoic acid). Calcium-independent, swelling-dependent volume-regulated anion channel (VRAC-swell) which plays a pivotal role in the process of regulatory volume decrease (RVD) in the brain through the efflux of anions like chloride and organic osmolytes like glutamate. In Mus musculus (Mouse), this protein is Protein tweety homolog 1 (Ttyh1).